The primary structure comprises 525 residues: MAKAIMVQGTASHVGKSILVTALCRIFRQDGYRVVPFKAQNMALNSFVTADGGEMGRAQVLQAQAAGLEPAVEMNPVLLKPTGNAASQVIVLGKPVGNMSARDYHLGKNQDLLGIIEETLRRLHREYEIIVIEGAGSPAEVNLKERDLANMRVSRLAGAPVLLVADIDRGGALAAVVGTLALLEPEEAEQVRGIVINKFRGDRSLLDPALEFLEARTGKPVLGVLPYLQGLRLPAEDSVCLEEADTAAEGELEIAVLYLPRISNFTDFDSLALEPGVRLRYVKDGEPLGSPDLVIIPGTKNTTEDLLYLYETGYAAAVRRAAAQGIPVCGICGGYQMLGRELRDVEHSESFRDELPGLGLLDVVTTFVGEKILARARGEVCGGGPLFQEIAGLPVAGYEIHMGRTVLGEGTRPLLRVVEREGGGGGDFDGAVAPSGLVWGTYFHGIFDNDLLRAHLLGWLRRRRGLSQGTLEEKAGGGRGSTCLERELDRLAGAYRAHLNLEKIYALLGLPGPRLPRPGAGGGPK.

The region spanning 251–452 (ELEIAVLYLP…FHGIFDNDLL (202 aa)) is the GATase cobBQ-type domain. The active-site Nucleophile is the Cys332. Residue His444 is part of the active site.

The protein belongs to the CobB/CobQ family. CobQ subfamily.

It participates in cofactor biosynthesis; adenosylcobalamin biosynthesis. Functionally, catalyzes amidations at positions B, D, E, and G on adenosylcobyrinic A,C-diamide. NH(2) groups are provided by glutamine, and one molecule of ATP is hydrogenolyzed for each amidation. The polypeptide is Cobyric acid synthase (Pelotomaculum thermopropionicum (strain DSM 13744 / JCM 10971 / SI)).